The sequence spans 334 residues: S-adenosylmethionine decarboxylase proenzyme (334 aa).

Residue phenylalanine 7 participates in substrate binding. Residues glutamate 8 and glutamate 11 contribute to the active site. A substrate-binding site is contributed by glutamate 67. Residue serine 68 is the Schiff-base intermediate with substrate; via pyruvic acid of the active site. Serine 68 is subject to Pyruvic acid (Ser); by autocatalysis. The active-site Proton donor; for catalytic activity is the cysteine 82. Phenylalanine 223 is a binding site for substrate. Active-site proton acceptor; for processing activity residues include serine 229 and histidine 243. Substrate is bound at residue glutamate 247. Serine 298 carries the phosphoserine modification.

It belongs to the eukaryotic AdoMetDC family. Heterotetramer of two alpha and two beta chains. The cofactor is pyruvate. Post-translationally, is synthesized initially as an inactive proenzyme. Formation of the active enzyme involves a self-maturation process in which the active site pyruvoyl group is generated from an internal serine residue via an autocatalytic post-translational modification. Two non-identical subunits are generated from the proenzyme in this reaction, and the pyruvate is formed at the N-terminus of the alpha chain, which is derived from the carboxyl end of the proenzyme. The post-translation cleavage follows an unusual pathway, termed non-hydrolytic serinolysis, in which the side chain hydroxyl group of the serine supplies its oxygen atom to form the C-terminus of the beta chain, while the remainder of the serine residue undergoes an oxidative deamination to produce ammonia and the pyruvoyl group blocking the N-terminus of the alpha chain.

It carries out the reaction S-adenosyl-L-methionine + H(+) = S-adenosyl 3-(methylsulfanyl)propylamine + CO2. It participates in amine and polyamine biosynthesis; S-adenosylmethioninamine biosynthesis; S-adenosylmethioninamine from S-adenosyl-L-methionine: step 1/1. Its function is as follows. Essential for biosynthesis of the polyamines spermidine and spermine. Promotes maintenance and self-renewal of embryonic stem cells, by maintaining spermine levels. The chain is S-adenosylmethionine decarboxylase proenzyme (AMD1) from Bos taurus (Bovine).